A 249-amino-acid polypeptide reads, in one-letter code: tRNA pseudouridine synthase A (249 aa).

Asp53 serves as the catalytic Nucleophile. Residue Tyr111 participates in substrate binding.

It belongs to the tRNA pseudouridine synthase TruA family. In terms of assembly, homodimer.

The enzyme catalyses uridine(38/39/40) in tRNA = pseudouridine(38/39/40) in tRNA. In terms of biological role, formation of pseudouridine at positions 38, 39 and 40 in the anticodon stem and loop of transfer RNAs. In Streptococcus pneumoniae serotype 2 (strain D39 / NCTC 7466), this protein is tRNA pseudouridine synthase A.